The primary structure comprises 308 residues: tRNA dimethylallyltransferase (308 aa).

Residue 10–17 (GPTASGKT) participates in ATP binding. Residue 12–17 (TASGKT) coordinates substrate. 2 interaction with substrate tRNA regions span residues 35 to 38 (DSSL) and 159 to 163 (QRIFR).

The protein belongs to the IPP transferase family. In terms of assembly, monomer. Mg(2+) serves as cofactor.

It carries out the reaction adenosine(37) in tRNA + dimethylallyl diphosphate = N(6)-dimethylallyladenosine(37) in tRNA + diphosphate. Its function is as follows. Catalyzes the transfer of a dimethylallyl group onto the adenine at position 37 in tRNAs that read codons beginning with uridine, leading to the formation of N6-(dimethylallyl)adenosine (i(6)A). In Francisella tularensis subsp. tularensis (strain FSC 198), this protein is tRNA dimethylallyltransferase.